Reading from the N-terminus, the 248-residue chain is tRNA pseudouridine synthase A (248 aa).

Asp-53 serves as the catalytic Nucleophile. Tyr-111 contacts substrate.

This sequence belongs to the tRNA pseudouridine synthase TruA family. In terms of assembly, homodimer.

The catalysed reaction is uridine(38/39/40) in tRNA = pseudouridine(38/39/40) in tRNA. Functionally, formation of pseudouridine at positions 38, 39 and 40 in the anticodon stem and loop of transfer RNAs. This Listeria monocytogenes serotype 4b (strain CLIP80459) protein is tRNA pseudouridine synthase A.